Here is a 517-residue protein sequence, read N- to C-terminus: Enantioselective amidase (517 aa).

Residues Lys-96 and Ser-173 each act as charge relay system in the active site. Ser-197 serves as the catalytic Acyl-ester intermediate.

Belongs to the amidase family. Homooctamer.

The catalysed reaction is a monocarboxylic acid amide + H2O = a monocarboxylate + NH4(+). This Rhodococcus rhodochrous protein is Enantioselective amidase (amdA).